Here is a 337-residue protein sequence, read N- to C-terminus: Tetraacyldisaccharide 4'-kinase (337 aa).

Position 55 to 62 (threonine 55 to threonine 62) interacts with ATP.

This sequence belongs to the LpxK family.

The catalysed reaction is a lipid A disaccharide + ATP = a lipid IVA + ADP + H(+). The protein operates within glycolipid biosynthesis; lipid IV(A) biosynthesis; lipid IV(A) from (3R)-3-hydroxytetradecanoyl-[acyl-carrier-protein] and UDP-N-acetyl-alpha-D-glucosamine: step 6/6. Transfers the gamma-phosphate of ATP to the 4'-position of a tetraacyldisaccharide 1-phosphate intermediate (termed DS-1-P) to form tetraacyldisaccharide 1,4'-bis-phosphate (lipid IVA). This Blochmanniella pennsylvanica (strain BPEN) protein is Tetraacyldisaccharide 4'-kinase.